Here is a 201-residue protein sequence, read N- to C-terminus: tRNA (guanine-N(7)-)-methyltransferase (201 aa).

Residues E33, E58, D85, and D106 each contribute to the S-adenosyl-L-methionine site. D106 is an active-site residue. Residues K110, D142, and 180 to 183 (TTYE) contribute to the substrate site.

The protein belongs to the class I-like SAM-binding methyltransferase superfamily. TrmB family.

It carries out the reaction guanosine(46) in tRNA + S-adenosyl-L-methionine = N(7)-methylguanosine(46) in tRNA + S-adenosyl-L-homocysteine. Its pathway is tRNA modification; N(7)-methylguanine-tRNA biosynthesis. Functionally, catalyzes the formation of N(7)-methylguanine at position 46 (m7G46) in tRNA. The sequence is that of tRNA (guanine-N(7)-)-methyltransferase from Mesomycoplasma hyopneumoniae (strain 232) (Mycoplasma hyopneumoniae).